The sequence spans 266 residues: tRNA (guanine-N(1)-)-methyltransferase (266 aa).

S-adenosyl-L-methionine is bound by residues Gly-113 and 137-142; that span reads LGDYVL.

The protein belongs to the RNA methyltransferase TrmD family. As to quaternary structure, homodimer.

It is found in the cytoplasm. It carries out the reaction guanosine(37) in tRNA + S-adenosyl-L-methionine = N(1)-methylguanosine(37) in tRNA + S-adenosyl-L-homocysteine + H(+). Functionally, specifically methylates guanosine-37 in various tRNAs. The polypeptide is tRNA (guanine-N(1)-)-methyltransferase (Paenarthrobacter aurescens (strain TC1)).